Reading from the N-terminus, the 247-residue chain is 3-deoxy-manno-octulosonate cytidylyltransferase (247 aa).

It belongs to the KdsB family.

Its subcellular location is the cytoplasm. It carries out the reaction 3-deoxy-alpha-D-manno-oct-2-ulosonate + CTP = CMP-3-deoxy-beta-D-manno-octulosonate + diphosphate. It functions in the pathway nucleotide-sugar biosynthesis; CMP-3-deoxy-D-manno-octulosonate biosynthesis; CMP-3-deoxy-D-manno-octulosonate from 3-deoxy-D-manno-octulosonate and CTP: step 1/1. Its pathway is bacterial outer membrane biogenesis; lipopolysaccharide biosynthesis. Functionally, activates KDO (a required 8-carbon sugar) for incorporation into bacterial lipopolysaccharide in Gram-negative bacteria. The sequence is that of 3-deoxy-manno-octulosonate cytidylyltransferase from Methylobacterium sp. (strain 4-46).